Reading from the N-terminus, the 190-residue chain is MNLILFGPPAAGKGTQAKRLVEQRRMVQLSTGDMLRAAIASGSELGQRVSGIMERGELVSDAIVIELIEQRLPEAEAAGGAIFDGFPRTLAQAEALDAMLAGRGRRIDLVVRLKVDDAALMQRIAGRFAESGRADDNPESFKVRLDAYNRQTAPLLPYYEGQGKLVEVDGMGSIDQVAAAIDAALTGAAA.

10 to 15 (AAGKGT) is a binding site for ATP. The interval 30 to 59 (STGDMLRAAIASGSELGQRVSGIMERGELV) is NMP. AMP-binding positions include Thr-31, Arg-36, 57–59 (ELV), 85–88 (GFPR), and Gln-92. The segment at 126–136 (GRFAESGRADD) is LID. Arg-127 lines the ATP pocket. AMP is bound by residues Arg-133 and Arg-144. Gly-172 provides a ligand contact to ATP.

Belongs to the adenylate kinase family. As to quaternary structure, monomer.

The protein localises to the cytoplasm. It catalyses the reaction AMP + ATP = 2 ADP. Its pathway is purine metabolism; AMP biosynthesis via salvage pathway; AMP from ADP: step 1/1. Catalyzes the reversible transfer of the terminal phosphate group between ATP and AMP. Plays an important role in cellular energy homeostasis and in adenine nucleotide metabolism. This chain is Adenylate kinase, found in Phenylobacterium zucineum (strain HLK1).